The sequence spans 389 residues: Aspartyl protease UND (389 aa).

The N-terminal stretch at Met1–Ala19 is a signal peptide. Residues Phe58–Asn383 enclose the Peptidase A1 domain. The active site involves Asp76. An intrachain disulfide couples Cys86 to Cys92. A glycan (N-linked (GlcNAc...) asparagine) is linked at Asn238. Asp268 is a catalytic residue. The cysteines at positions 304 and 346 are disulfide-linked.

The protein belongs to the peptidase A1 family.

Its function is as follows. Probable aspartic protease activated by the transcription factor MYB80. May participate in the regulation of the timing of tapetal programmed cell death (PCD) which is critical for pollen development. This Arabidopsis thaliana (Mouse-ear cress) protein is Aspartyl protease UND.